The chain runs to 606 residues: Aspartate--tRNA(Asp/Asn) ligase (606 aa).

Glu-177 is an L-aspartate binding site. An aspartate region spans residues 201 to 204 (QLFK). Position 223 (Arg-223) interacts with L-aspartate. ATP-binding positions include 223-225 (RDE) and Gln-232. His-461 contributes to the L-aspartate binding site. Glu-499 contributes to the ATP binding site. Arg-506 serves as a coordination point for L-aspartate. 551-554 (GLDR) lines the ATP pocket.

This sequence belongs to the class-II aminoacyl-tRNA synthetase family. Type 1 subfamily. Homodimer.

It is found in the cytoplasm. The enzyme catalyses tRNA(Asx) + L-aspartate + ATP = L-aspartyl-tRNA(Asx) + AMP + diphosphate. In terms of biological role, aspartyl-tRNA synthetase with relaxed tRNA specificity since it is able to aspartylate not only its cognate tRNA(Asp) but also tRNA(Asn). Reaction proceeds in two steps: L-aspartate is first activated by ATP to form Asp-AMP and then transferred to the acceptor end of tRNA(Asp/Asn). In Prochlorococcus marinus (strain NATL2A), this protein is Aspartate--tRNA(Asp/Asn) ligase.